A 110-amino-acid chain; its full sequence is Large ribosomal subunit protein uL22 (110 aa).

It belongs to the universal ribosomal protein uL22 family. In terms of assembly, part of the 50S ribosomal subunit.

Its function is as follows. This protein binds specifically to 23S rRNA; its binding is stimulated by other ribosomal proteins, e.g. L4, L17, and L20. It is important during the early stages of 50S assembly. It makes multiple contacts with different domains of the 23S rRNA in the assembled 50S subunit and ribosome. Functionally, the globular domain of the protein is located near the polypeptide exit tunnel on the outside of the subunit, while an extended beta-hairpin is found that lines the wall of the exit tunnel in the center of the 70S ribosome. This is Large ribosomal subunit protein uL22 from Pseudomonas savastanoi pv. phaseolicola (strain 1448A / Race 6) (Pseudomonas syringae pv. phaseolicola (strain 1448A / Race 6)).